The primary structure comprises 232 residues: Ion-translocating oxidoreductase complex subunit E (232 aa).

Helical transmembrane passes span 39–59, 69–89, 93–113, 128–148, and 182–202; these read LGLG…ISLV, IPVF…LVNA, GLYM…IIIG, AFDG…LGAT, and SFLL…LIAL.

The protein belongs to the NqrDE/RnfAE family. The complex is composed of six subunits: RnfA, RnfB, RnfC, RnfD, RnfE and RnfG.

The protein localises to the cell inner membrane. Functionally, part of a membrane-bound complex that couples electron transfer with translocation of ions across the membrane. In Shewanella oneidensis (strain ATCC 700550 / JCM 31522 / CIP 106686 / LMG 19005 / NCIMB 14063 / MR-1), this protein is Ion-translocating oxidoreductase complex subunit E.